The chain runs to 405 residues: Putative polysaccharide ligase RP358 (405 aa).

A run of 10 helical transmembrane segments spans residues 23 to 43, 77 to 97, 120 to 140, 156 to 178, 201 to 221, 227 to 247, 270 to 290, 322 to 342, 353 to 375, and 377 to 397; these read IAAT…ISFI, LFTA…NSLV, VLYI…LFFI, FGLY…AIII, ISDS…FILA, IFFK…PVIA, LFIW…GYGF, ILQI…CLVY, VSNF…MISY, and IWQT…KLLV.

Belongs to the O-antigen ligase family.

Its subcellular location is the membrane. The protein is Putative polysaccharide ligase RP358 of Rickettsia prowazekii (strain Madrid E).